The primary structure comprises 485 residues: tRNA sulfurtransferase (485 aa).

The 105-residue stretch at 61–165 (EELIALLQRI…DDKMMLVKAR (105 aa)) folds into the THUMP domain. ATP-binding positions include 183-184 (LI), K265, G287, and Q296. A disulfide bond links C344 and C456. Residues 404–483 (LGENEVILDI…FSNVRVFAKN (80 aa)) form the Rhodanese domain. Residue C456 is the Cysteine persulfide intermediate of the active site.

It belongs to the ThiI family.

It localises to the cytoplasm. The catalysed reaction is [ThiI sulfur-carrier protein]-S-sulfanyl-L-cysteine + a uridine in tRNA + 2 reduced [2Fe-2S]-[ferredoxin] + ATP + H(+) = [ThiI sulfur-carrier protein]-L-cysteine + a 4-thiouridine in tRNA + 2 oxidized [2Fe-2S]-[ferredoxin] + AMP + diphosphate. It carries out the reaction [ThiS sulfur-carrier protein]-C-terminal Gly-Gly-AMP + S-sulfanyl-L-cysteinyl-[cysteine desulfurase] + AH2 = [ThiS sulfur-carrier protein]-C-terminal-Gly-aminoethanethioate + L-cysteinyl-[cysteine desulfurase] + A + AMP + 2 H(+). It functions in the pathway cofactor biosynthesis; thiamine diphosphate biosynthesis. Catalyzes the ATP-dependent transfer of a sulfur to tRNA to produce 4-thiouridine in position 8 of tRNAs, which functions as a near-UV photosensor. Also catalyzes the transfer of sulfur to the sulfur carrier protein ThiS, forming ThiS-thiocarboxylate. This is a step in the synthesis of thiazole, in the thiamine biosynthesis pathway. The sulfur is donated as persulfide by IscS. This is tRNA sulfurtransferase from Haemophilus influenzae (strain PittGG).